The primary structure comprises 484 residues: Aldehyde dehydrogenase family 3 member H1 (484 aa).

Gly196–Gly201 contacts NAD(+). Glu218 functions as the Proton acceptor in the catalytic mechanism. Cys253 acts as the Nucleophile in catalysis.

It belongs to the aldehyde dehydrogenase family. As to quaternary structure, homodimer and homomultimer. In terms of tissue distribution, isoform alpha is expressed in expanded leaves and flowers. Detected in seedlings. Isoform beta is mainly expressed in flowers. Detected in leaves and seedlings.

The catalysed reaction is an aldehyde + NAD(+) + H2O = a carboxylate + NADH + 2 H(+). Thiol-based regulation. Inactivation after dimerization under oxidizing conditions. In terms of biological role, involved in oxidative stress tolerance by detoxifying reactive aldehydes derived from lipid peroxidation. Medium- to long-chain saturated aldehydes are preferred substrates, while the short-chain aldehyde propanal is a weak substrate. Is strictely NAD(+) specific. This chain is Aldehyde dehydrogenase family 3 member H1 (ALDH3H1), found in Arabidopsis thaliana (Mouse-ear cress).